Here is a 46-residue protein sequence, read N- to C-terminus: Esculentin-1 (46 aa).

Cys40 and Cys46 are joined by a disulfide.

As to expression, expressed by the skin glands.

The protein resides in the secreted. Functionally, antimicrobial peptide. Stimulates insulin release by BRIN-BD11 cells in vitro. The sequence is that of Esculentin-1 from Pelophylax saharicus (Sahara frog).